Reading from the N-terminus, the 411-residue chain is Heparan-sulfate 6-O-sulfotransferase 1 (411 aa).

Residues 1–19 (MRRRRAGGRTMVERASKFV) are Cytoplasmic-facing. A helical; Signal-anchor for type II membrane protein membrane pass occupies residues 20 to 37 (LVVAGSACFMLILYQYAG). At 38 to 411 (PGLSLGAPGG…DYMSHIIEKW (374 aa)) the chain is on the lumenal side. Position 93 to 101 (93 to 101 (HIQKTGGTT)) interacts with 3'-phosphoadenylyl sulfate. Substrate is bound by residues 123 to 124 (KK), arginine 140, tryptophan 145, and histidine 150. Histidine 150 (proton acceptor) is an active-site residue. Positions 185 and 193 each coordinate 3'-phosphoadenylyl sulfate. Residues histidine 197 and tryptophan 204 each coordinate substrate. N-linked (GlcNAc...) asparagine glycosylation is present at asparagine 264. 317–319 (MQY) contributes to the 3'-phosphoadenylyl sulfate binding site. Residue asparagine 320 is glycosylated (N-linked (GlcNAc...) asparagine). 3'-phosphoadenylyl sulfate is bound at residue 323–324 (RA). A coiled-coil region spans residues 352 to 386 (KDLFQQRYQYKRQLERREQRLRNREERLLHRSKEA). The segment at 380-401 (LHRSKEALPREDPEEPGRVPTE) is disordered.

Belongs to the sulfotransferase 6 family. N-glycosylated. As to expression, expressed in fetal brain and liver.

It is found in the membrane. It carries out the reaction alpha-D-glucosaminyl-[heparan sulfate](n) + 3'-phosphoadenylyl sulfate = 6-sulfo-alpha-D-glucosaminyl-[heparan sulfate](n) + adenosine 3',5'-bisphosphate + H(+). In terms of biological role, 6-O-sulfation enzyme which catalyzes the transfer of sulfate from 3'-phosphoadenosine 5'-phosphosulfate (PAPS) to position 6 of the N-sulfoglucosamine residue (GlcNS) of heparan sulfate. Critical for normal neuronal development where it may play a role in neuron branching. May also play a role in limb development. May prefer iduronic acid. This is Heparan-sulfate 6-O-sulfotransferase 1 from Mus musculus (Mouse).